The sequence spans 560 residues: MSIGDVCSARFIFVTGGVVSSLGKGLAAASIGALLQARGFRVRLRKLDPYLNVDPGTMSPAQHGEVFVTDDGGETDLDLGNYERFTGVNTTKEDNITAGRIYQQLLAKERRGDYLGHTVQVIPHVTDLIISFILSNDDGADFIICEIGGTVGDIESQPFLESIRQVSYRLSKNFTIFVHLTLVPCVGSAGELKTKPTQHSVKELSSLGIQPDIILYRSAEPLPQYQSAKIANFCNVSADNVIPALDVESMYKLPVMYHAHKLDTQILSHFGMGAPEPDLTKWANVLTMVNNARNVVTIAIIGKYTKFLDAYTSLTEALDHAGMHSGIKIQVKWVDSRLPVRESDLHDVDGVLIPGGFGDDGVDGKVLAIGYARANGIPMLGICMGMQLAAIEFALNVAKLEDANSTEFNQACKNPIVVELPWLQKGEGEYLLGGSMRLGSCTYRLSADSRVASVYGSTVINERCRHRYCINPQYKNVLEEHGLSFTGMSDSHGLVEVLELQSHPWFIGVQFHPEFKSSPFAPHPLFTSFVQNVLQIKQRGFMHKSVSAAAILVPGSSVVS.

Residues 1–272 (MSIGDVCSAR…DTQILSHFGM (272 aa)) are amidoligase domain. Position 20 (Ser20) interacts with CTP. UTP is bound at residue Ser20. Residues 21-26 (SLGKGL) and Asp78 contribute to the ATP site. Mg(2+) contacts are provided by Asp78 and Glu146. CTP is bound by residues 153–155 (DIE), 193–198 (KTKPTQ), and Lys229. Residues 193-198 (KTKPTQ) and Lys229 each bind UTP. Residues 297-539 (TIAIIGKYTK…VQNVLQIKQR (243 aa)) enclose the Glutamine amidotransferase type-1 domain. Position 356 (Gly356) interacts with L-glutamine. Cys383 acts as the Nucleophile; for glutamine hydrolysis in catalysis. Residues 384–387 (MGMQ), Glu407, and Arg467 contribute to the L-glutamine site. Active-site residues include His512 and Glu514.

This sequence belongs to the CTP synthase family. Homotetramer.

The enzyme catalyses UTP + L-glutamine + ATP + H2O = CTP + L-glutamate + ADP + phosphate + 2 H(+). It carries out the reaction L-glutamine + H2O = L-glutamate + NH4(+). The catalysed reaction is UTP + NH4(+) + ATP = CTP + ADP + phosphate + 2 H(+). It participates in pyrimidine metabolism; CTP biosynthesis via de novo pathway; CTP from UDP: step 2/2. With respect to regulation, allosterically activated by GTP, when glutamine is the substrate; GTP has no effect on the reaction when ammonia is the substrate. The allosteric effector GTP functions by stabilizing the protein conformation that binds the tetrahedral intermediate(s) formed during glutamine hydrolysis. Inhibited by the product CTP, via allosteric rather than competitive inhibition. Catalyzes the ATP-dependent amination of UTP to CTP with either L-glutamine or ammonia as the source of nitrogen. Regulates intracellular CTP levels through interactions with the four ribonucleotide triphosphates. The polypeptide is CTP synthase (Anaplasma marginale (strain Florida)).